Here is a 161-residue protein sequence, read N- to C-terminus: Crossover junction endodeoxyribonuclease RuvC (161 aa).

Residues Asp-8, Glu-67, and Asp-139 contribute to the active site. Positions 8, 67, and 139 each coordinate Mg(2+).

The protein belongs to the RuvC family. As to quaternary structure, homodimer which binds Holliday junction (HJ) DNA. The HJ becomes 2-fold symmetrical on binding to RuvC with unstacked arms; it has a different conformation from HJ DNA in complex with RuvA. In the full resolvosome a probable DNA-RuvA(4)-RuvB(12)-RuvC(2) complex forms which resolves the HJ. The cofactor is Mg(2+).

Its subcellular location is the cytoplasm. It catalyses the reaction Endonucleolytic cleavage at a junction such as a reciprocal single-stranded crossover between two homologous DNA duplexes (Holliday junction).. Its function is as follows. The RuvA-RuvB-RuvC complex processes Holliday junction (HJ) DNA during genetic recombination and DNA repair. Endonuclease that resolves HJ intermediates. Cleaves cruciform DNA by making single-stranded nicks across the HJ at symmetrical positions within the homologous arms, yielding a 5'-phosphate and a 3'-hydroxyl group; requires a central core of homology in the junction. The consensus cleavage sequence is 5'-(A/T)TT(C/G)-3'. Cleavage occurs on the 3'-side of the TT dinucleotide at the point of strand exchange. HJ branch migration catalyzed by RuvA-RuvB allows RuvC to scan DNA until it finds its consensus sequence, where it cleaves and resolves the cruciform DNA. In Wigglesworthia glossinidia brevipalpis, this protein is Crossover junction endodeoxyribonuclease RuvC.